We begin with the raw amino-acid sequence, 428 residues long: Trigger factor (428 aa).

The PPIase FKBP-type domain occupies 163–248 (GDTVVIDFEG…VHEVKAKQLP (86 aa)).

The protein belongs to the FKBP-type PPIase family. Tig subfamily.

The protein resides in the cytoplasm. It catalyses the reaction [protein]-peptidylproline (omega=180) = [protein]-peptidylproline (omega=0). In terms of biological role, involved in protein export. Acts as a chaperone by maintaining the newly synthesized protein in an open conformation. Functions as a peptidyl-prolyl cis-trans isomerase. This Geobacillus kaustophilus (strain HTA426) protein is Trigger factor.